We begin with the raw amino-acid sequence, 330 residues long: Autoinducer 2 import system permease protein LsrD (330 aa).

Residues 1 to 4 are Cytoplasmic-facing; that stretch reads MRIR. A helical transmembrane segment spans residues 5-25; it reads YGWELALAALLVIEIVAFGAI. The Periplasmic portion of the chain corresponds to 26 to 42; sequence NPRMLDLNMLLFSTSDF. The chain crosses the membrane as a helical span at residues 43-63; sequence ICIGIVALPLTMVIVSGGIDI. Residues 64–67 are Cytoplasmic-facing; it reads SFGS. Helical transmembrane passes span 68-88 and 89-109; these read TIGL…PMPL and AILL…GLII. Over 110–115 the chain is Cytoplasmic; it reads YTKVNP. The chain crosses the membrane as a helical span at residues 116–136; sequence LVITLGTLYLFAGSALLLSGM. The Periplasmic segment spans residues 137–159; the sequence is AGATGYEGIGGFPMAFTDFANLD. A helical transmembrane segment spans residues 160–180; it reads VLGLPVPLIIFLICLLVFWLW. Residues 181–209 lie on the Cytoplasmic side of the membrane; it reads LHKTHAGRNVFLIGQSPRVALYSAIPVNR. The helical transmembrane segment at 210–230 threads the bilayer; the sequence is TLCALYAMTGLASAVAAVLLV. Residues 231 to 237 are Periplasmic-facing; that stretch reads SYFGSAR. The next 2 membrane-spanning stretches (helical) occupy residues 238-258 and 259-279; these read SDLG…GGAN and IYGG…VGYL. Topologically, residues 280-285 are periplasmic; it reads QQGLQM. Residues 286 to 306 traverse the membrane as a helical segment; that stretch reads AGVPNQVSSALSGALLIVVVV. At 307–330 the chain is on the cytoplasmic side; sequence GRSVSLHRQQIKEWLARRANNPLP.

The protein belongs to the binding-protein-dependent transport system permease family. AraH/RbsC subfamily. The complex is composed of two ATP-binding proteins (LsrA), two transmembrane proteins (LsrC and LsrD) and a solute-binding protein (LsrB).

It localises to the cell inner membrane. Functionally, part of the ABC transporter complex LsrABCD involved in autoinducer 2 (AI-2) import. Probably responsible for the translocation of the substrate across the membrane. This is Autoinducer 2 import system permease protein LsrD (lsrD) from Shigella flexneri serotype 5b (strain 8401).